The following is an 841-amino-acid chain: Alpha-glucuronidase A (841 aa).

The signal sequence occupies residues 1-20 (MRGSNLFQLTLALLLSLVAA). N-linked (GlcNAc...) asparagine glycosylation is found at N51, N76, N149, N222, N279, N310, N343, N450, N465, N527, N576, N682, N723, and N732.

It belongs to the glycosyl hydrolase 67 family.

The protein localises to the secreted. The catalysed reaction is an alpha-D-glucuronoside + H2O = D-glucuronate + an alcohol. Alpha-glucuronidase involved in the hydrolysis of xylan, a major structural heterogeneous polysaccharide found in plant biomass representing the second most abundant polysaccharide in the biosphere, after cellulose. Releases 4-O-methylglucuronic acid from xylan. This Aspergillus tubingensis protein is Alpha-glucuronidase A (aguA).